The chain runs to 314 residues: NADH-ubiquinone oxidoreductase chain 1 (314 aa).

Helical transmembrane passes span 5–25 (IMPL…VAFL), 78–98 (FSPV…PYLI), 105–125 (LGVL…MIAG), 152–172 (ALIL…SFYF), 176–196 (YVWF…SCLA), 227–247 (LIFL…VVIF), 251–271 (DIYS…FIWV), and 294–314 (LSLN…SLLF).

This sequence belongs to the complex I subunit 1 family.

The protein localises to the mitochondrion inner membrane. It catalyses the reaction a ubiquinone + NADH + 5 H(+)(in) = a ubiquinol + NAD(+) + 4 H(+)(out). In terms of biological role, core subunit of the mitochondrial membrane respiratory chain NADH dehydrogenase (Complex I) that is believed to belong to the minimal assembly required for catalysis. Complex I functions in the transfer of electrons from NADH to the respiratory chain. The immediate electron acceptor for the enzyme is believed to be ubiquinone. The protein is NADH-ubiquinone oxidoreductase chain 1 (mt:ND1) of Anopheles gambiae (African malaria mosquito).